Here is a 1620-residue protein sequence, read N- to C-terminus: Myb-like protein X (1620 aa).

Over residues 1 to 13 (MSTIGNNASSIGN) the composition is skewed to polar residues. Disordered regions lie at residues 1–57 (MSTI…TTTT), 176–204 (TGSGGIGGGGSGSSTPNRGRFSGKTSNIG), 294–318 (FFQDDNENGNGNGNGSGSGSNNMTE), and 450–849 (KEEK…TKSA). A compositionally biased stretch (low complexity) spans 28-57 (PPTTTTTTTTTTTTTTTTPTTTTPTTTTTT). Over residues 177 to 187 (GSGGIGGGGSG) the composition is skewed to gly residues. An SWIRM domain is found at 310–421 (GSGSNNMTEI…CFVNSGDYMN (112 aa)). The span at 450–497 (KEEKERLEREEKERLEREEKQEKEEKERLEKEEKERLEREEKQEKEEK) shows a compositional bias: basic and acidic residues. Residues 498 to 511 (EEKEEKEENEEKEE) show a composition bias toward acidic residues. A compositionally biased stretch (basic and acidic residues) spans 512–568 (KEEKEKEEKEEKEKQEKEDDKEKQENENEQEKIEKKENKNDSQNKEIKENHDKKDET). Positions 570–598 (DSNNTTTTTTTTTTTSTNTLVAESSSSSS) are enriched in low complexity. Positions 606–628 (KEMKEQPVQENKDKEMMETDTTK) are enriched in basic and acidic residues. The span at 629–645 (ENNGVETTETTNQTTDS) shows a compositional bias: low complexity. Residues 647–798 (ETDKEMKDQP…EIKKDKLKEN (152 aa)) are compositionally biased toward basic and acidic residues. Over residues 799 to 834 (EEVEGEIEGENDEGEVVEEDEDEEMEIEEDEEDEED) the composition is skewed to acidic residues. Residues 925–977 (PEEFGWTDIETLLLLEGIEIFRDNWQEISDYIGGSKTPEQCLTHFIRLPIEDE) form the SANT domain. The disordered stretch occupies residues 1049–1506 (QPSKEELERI…DDDEDVEMET (458 aa)). Composition is skewed to basic and acidic residues over residues 1051 to 1195 (SKEE…DKSD), 1219 to 1255 (ETVEMNQDDHVKIDEKETKENDKKSITEEENQQKDDN), and 1264 to 1302 (HNKEIEKDDNKENENEKEKENENKNEKQIENENEKEKDL). Residues 1303-1325 (NNLSESQSSNDQSKSNEQMSSDN) show a composition bias toward low complexity. Polar residues predominate over residues 1338-1350 (TQITSKEQNITTD). Low complexity-rich tracts occupy residues 1358 to 1382 (TPTTTTPATLPATPISESNTTTTNT) and 1390 to 1416 (NETNKTNENNSNNNNTNEENKTAESNN). Acidic residues-rich tracts occupy residues 1467 to 1481 (EENEMEEVEEEENDL) and 1493 to 1504 (VGEEDDDEDVEM).

Its subcellular location is the nucleus. In Dictyostelium discoideum (Social amoeba), this protein is Myb-like protein X (mybX).